We begin with the raw amino-acid sequence, 377 residues long: Metallo-hydrolase mfmC (377 aa).

The Zn(2+) site is built by His126, His128, Asp130, His131, His209, and Asp233.

This sequence belongs to the metallo-beta-lactamase superfamily.

The protein operates within secondary metabolite biosynthesis; terpenoid biosynthesis. Its function is as follows. Metallo-hydrolase; part of the gene cluster that mediates the biosynthesis of the phthalide-terpenoid hybrid 11'-O-desmethylfendlerol. Within the pathway, mfma and mfmC act together to convert 3,5-dimethylorsellinic acid (DMOA) into the phthalide 5,7-dihydroxy-4-(hydroxymethyl)-6-methylphthalide. The biosynthesis of 11'-O-desmethylfendlerol begins with the NR-PKS mfmB that forms 3,5-dimethylorsellinic acid (DMOA), which is then transformed into the phthalide 5,7-dihydroxy-4-(hydroxymethyl)-6-methylphthalide by the cytochrome P450 monooxygenase mfmA and the hydrolase mfmC. Subsequently, the methyltransferase mfmE catalyzes 7-O-methylation to yield 5-hydroxy-4-(hydroxymethyl)-7-methoxy-6-methylphthalide, which undergoes C-3 hydroxylation by the cytochrome P450 monooxygenase mfmF. The resultant cyclopolic acid (2,5-dihydroxy-4-(hydroxymethyl)-7-methoxy-6-methylphthalide) is then farnesylated by the DMATS-type prenyltransferase mfmD to afford 5-O-farnesylcyclopolic acid. Finally, the Pyr4-family terpene cyclase mfmH cyclizes the farnesyl moiety of 5-O-farnesylcyclopolic acid into a drimane-like structure, thus completing the biosynthesis of 11'-O-desmethylfendlerol. The chain is Metallo-hydrolase mfmC from Annulohypoxylon moriforme (Filamentous fungus).